Reading from the N-terminus, the 229-residue chain is Small ribosomal subunit protein uS2c (229 aa).

This sequence belongs to the universal ribosomal protein uS2 family.

The protein resides in the plastid. The protein localises to the chloroplast. This is Small ribosomal subunit protein uS2c (rps2) from Trieres chinensis (Marine centric diatom).